A 407-amino-acid chain; its full sequence is MSQNESGTIAIPMYDKDDAVLVLEDGQVYVGEPYGALGETTGEIVFATGMTGYQETLTDPSYDRQIVVQTFPHIGDTGVNSEDPESSRIWVAGYIVRDPSPNVSNWRAEGSLDDDLAKNGIVGLSHIDTRKLVRHLRSAGVMRAGIFSGDALTDQATGALKTIEQLLEDVKNTPQMQGLSLYDEVSTKGTYTIEPCGEYEGKEPLYTVAAVDLGIKGMTPHRMAERGCRVHVVPSTITFAEIENLNPDGVFFSNGPGDPEQAGPEIELLRQVLDAGYPFFGICFGNQLLGRALGFGTYKLKFGHRGINQPVKDLTTGKVEVTAHNHGFAVDAPIGKQVDAPFENGKYGKVFVSHIDLNDDVVEGLQCVDIPAFSVQYHPEAAAGPHDAAYLFDRFCELMKNNSKEGK.

The tract at residues 1 to 203 (MSQNESGTIA…EPCGEYEGKE (203 aa)) is CPSase. L-glutamine is bound by residues S61, G255, and G257. Positions 207–405 (TVAAVDLGIK…CELMKNNSKE (199 aa)) constitute a Glutamine amidotransferase type-1 domain. Catalysis depends on C283, which acts as the Nucleophile. The L-glutamine site is built by F284, Q287, N325, G327, and F328. Residues H378 and E380 contribute to the active site.

Belongs to the CarA family. Composed of two chains; the small (or glutamine) chain promotes the hydrolysis of glutamine to ammonia, which is used by the large (or ammonia) chain to synthesize carbamoyl phosphate. Tetramer of heterodimers (alpha,beta)4.

The catalysed reaction is hydrogencarbonate + L-glutamine + 2 ATP + H2O = carbamoyl phosphate + L-glutamate + 2 ADP + phosphate + 2 H(+). The enzyme catalyses L-glutamine + H2O = L-glutamate + NH4(+). The protein operates within amino-acid biosynthesis; L-arginine biosynthesis; carbamoyl phosphate from bicarbonate: step 1/1. Its pathway is pyrimidine metabolism; UMP biosynthesis via de novo pathway; (S)-dihydroorotate from bicarbonate: step 1/3. In terms of biological role, small subunit of the glutamine-dependent carbamoyl phosphate synthetase (CPSase). CPSase catalyzes the formation of carbamoyl phosphate from the ammonia moiety of glutamine, carbonate, and phosphate donated by ATP, constituting the first step of 2 biosynthetic pathways, one leading to arginine and/or urea and the other to pyrimidine nucleotides. The small subunit (glutamine amidotransferase) binds and cleaves glutamine to supply the large subunit with the substrate ammonia. The protein is Carbamoyl phosphate synthase small chain of Bifidobacterium longum (strain DJO10A).